The following is a 251-amino-acid chain: Cholesterol 25-hydroxylase-like protein (251 aa).

3 consecutive transmembrane segments (helical) span residues 22-42, 69-89, and 108-128; these read FFPV…FVLL, WSCL…LSVL, and VVWD…VWHL. A Fatty acid hydroxylase domain is found at 113–247; the sequence is AACLLLFDFQ…FTHWDKLFGT (135 aa). A Histidine box-1 motif is present at residues 126–130; the sequence is WHLLH. Residues 141–145 carry the Histidine box-2 motif; sequence HKVHH. The short motif at 222 to 228 is the Histidine box-3 element; it reads HHDVHHQ.

It belongs to the sterol desaturase family. Fe cation is required as a cofactor.

The protein resides in the endoplasmic reticulum membrane. It catalyses the reaction cholesterol + AH2 + O2 = 25-hydroxycholesterol + A + H2O. The enzyme catalyses cholesterol + NADPH + O2 + H(+) = 25-hydroxycholesterol + NADP(+) + H2O. Functionally, catalyzes the formation of 25-hydroxycholesterol from cholesterol, leading to repress cholesterol biosynthetic enzymes. Plays a key role in cell positioning and movement in lymphoid tissues: 25-hydroxycholesterol is an intermediate in biosynthesis of 7-alpha,25-dihydroxycholesterol (7-alpha,25-OHC), an oxysterol that acts as a ligand for the G protein-coupled receptor GPR183/EBI2, a chemotactic receptor for a number of lymphoid cells. May play an important role in regulating lipid metabolism by synthesizing a corepressor that blocks sterol regulatory element binding protein (SREBP) processing. In testis, production of 25-hydroxycholesterol by macrophages may play a role in Leydig cell differentiation. In Danio rerio (Zebrafish), this protein is Cholesterol 25-hydroxylase-like protein (ch25h).